The primary structure comprises 431 residues: Enolase (431 aa).

Residue Gln166 participates in (2R)-2-phosphoglycerate binding. Glu208 acts as the Proton donor in catalysis. Mg(2+) is bound by residues Asp245, Glu288, and Asp315. (2R)-2-phosphoglycerate is bound by residues Lys340, Arg369, Ser370, and Lys391. The active-site Proton acceptor is Lys340.

The protein belongs to the enolase family. Mg(2+) is required as a cofactor.

The protein resides in the cytoplasm. The protein localises to the secreted. It localises to the cell surface. The enzyme catalyses (2R)-2-phosphoglycerate = phosphoenolpyruvate + H2O. The protein operates within carbohydrate degradation; glycolysis; pyruvate from D-glyceraldehyde 3-phosphate: step 4/5. Its function is as follows. Catalyzes the reversible conversion of 2-phosphoglycerate (2-PG) into phosphoenolpyruvate (PEP). It is essential for the degradation of carbohydrates via glycolysis. The sequence is that of Enolase from Clostridium botulinum (strain 657 / Type Ba4).